The sequence spans 761 residues: Phosphoribosylformylglycinamidine synthase subunit PurL (761 aa).

His-49 is an active-site residue. Positions 52 and 92 each coordinate ATP. Glu-94 serves as a coordination point for Mg(2+). Residues 95–98 (SHNH) and Arg-117 contribute to the substrate site. His-96 acts as the Proton acceptor in catalysis. Residue Asp-118 coordinates Mg(2+). Position 241 (Gln-241) interacts with substrate. Asp-269 is a Mg(2+) binding site. A substrate-binding site is contributed by 318 to 320 (ESQ). ATP contacts are provided by Asn-502 and Gly-539. A Mg(2+)-binding site is contributed by Asn-540. Position 542 (Ser-542) interacts with substrate.

Belongs to the FGAMS family. In terms of assembly, monomer. Part of the FGAM synthase complex composed of 1 PurL, 1 PurQ and 2 PurS subunits.

The protein resides in the cytoplasm. It catalyses the reaction N(2)-formyl-N(1)-(5-phospho-beta-D-ribosyl)glycinamide + L-glutamine + ATP + H2O = 2-formamido-N(1)-(5-O-phospho-beta-D-ribosyl)acetamidine + L-glutamate + ADP + phosphate + H(+). Its pathway is purine metabolism; IMP biosynthesis via de novo pathway; 5-amino-1-(5-phospho-D-ribosyl)imidazole from N(2)-formyl-N(1)-(5-phospho-D-ribosyl)glycinamide: step 1/2. Its function is as follows. Part of the phosphoribosylformylglycinamidine synthase complex involved in the purines biosynthetic pathway. Catalyzes the ATP-dependent conversion of formylglycinamide ribonucleotide (FGAR) and glutamine to yield formylglycinamidine ribonucleotide (FGAM) and glutamate. The FGAM synthase complex is composed of three subunits. PurQ produces an ammonia molecule by converting glutamine to glutamate. PurL transfers the ammonia molecule to FGAR to form FGAM in an ATP-dependent manner. PurS interacts with PurQ and PurL and is thought to assist in the transfer of the ammonia molecule from PurQ to PurL. The chain is Phosphoribosylformylglycinamidine synthase subunit PurL from Chlorobium luteolum (strain DSM 273 / BCRC 81028 / 2530) (Pelodictyon luteolum).